The primary structure comprises 154 residues: Small ribosomal subunit protein uS15 (154 aa).

Residues 1–14 (MAPVPHRSRHKKGR) are compositionally biased toward basic residues. The interval 1–24 (MAPVPHRSRHKKGRSGSVRPAHPT) is disordered.

This sequence belongs to the universal ribosomal protein uS15 family. As to quaternary structure, part of the 30S ribosomal subunit.

This is Small ribosomal subunit protein uS15 from Pyrobaculum arsenaticum (strain DSM 13514 / JCM 11321 / PZ6).